The sequence spans 286 residues: ATP synthase gamma chain (286 aa).

The protein belongs to the ATPase gamma chain family. In terms of assembly, F-type ATPases have 2 components, CF(1) - the catalytic core - and CF(0) - the membrane proton channel. CF(1) has five subunits: alpha(3), beta(3), gamma(1), delta(1), epsilon(1). CF(0) has three main subunits: a, b and c.

It is found in the cell membrane. Produces ATP from ADP in the presence of a proton gradient across the membrane. The gamma chain is believed to be important in regulating ATPase activity and the flow of protons through the CF(0) complex. The polypeptide is ATP synthase gamma chain (Ruminococcus albus (strain ATCC 27210 / DSM 20455 / JCM 14654 / NCDO 2250 / 7)).